Reading from the N-terminus, the 419-residue chain is eIF5-mimic protein 1 (419 aa).

The interval 1-22 (MNKHQKPVLTGQRFKTRKRDEK) is disordered. Residue K117 is modified to N6-acetyllysine. In terms of domain architecture, W2 spans 248-415 (VQQSLGTRKE…QNAEEESESE (168 aa)). Residues S412 and S414 each carry the phosphoserine modification.

The protein belongs to the BZW family. In terms of assembly, interacts with EIF3E. Interacts with EIF2S2. Interacts with EIF3C.

It localises to the cytoplasm. Its function is as follows. Translation initiation regulator which represses non-AUG initiated translation and repeat-associated non-AUG (RAN) initiated translation by acting as a competitive inhibitor of eukaryotic translation initiation factor 5 (EIF5) function. Increases the accuracy of translation initiation by impeding EIF5-dependent translation from non-AUG codons by competing with it for interaction with EIF2S2 within the 43S pre-initiation complex (PIC) in an EIF3C-binding dependent manner. This chain is eIF5-mimic protein 1 (BZW2), found in Homo sapiens (Human).